A 581-amino-acid chain; its full sequence is Putative protein phosphatase 2C 22 (581 aa).

The N-terminal stretch at 1–21 (MVISVPLFSSVLLALVVAVPA) is a signal peptide. Residues 102-478 (KYASSAMQGL…NNATAILVQF (377 aa)) form the PPM-type phosphatase domain. The Mn(2+) site is built by D138, G139, D373, and N469. Residues 538–563 (SDEVAGGAAVAEQHQHNPEGGGEQQL) form a disordered region.

This sequence belongs to the PP2C family. It depends on Mg(2+) as a cofactor. The cofactor is Mn(2+).

The catalysed reaction is O-phospho-L-seryl-[protein] + H2O = L-seryl-[protein] + phosphate. The enzyme catalyses O-phospho-L-threonyl-[protein] + H2O = L-threonyl-[protein] + phosphate. This is Putative protein phosphatase 2C 22 from Oryza sativa subsp. japonica (Rice).